We begin with the raw amino-acid sequence, 881 residues long: Leucine--tRNA ligase (881 aa).

A 'HIGH' region motif is present at residues 48-58 (PYPSGKLHMGH). Residues 638 to 642 (KMSKS) carry the 'KMSKS' region motif. ATP is bound at residue K641.

The protein belongs to the class-I aminoacyl-tRNA synthetase family.

It is found in the cytoplasm. The enzyme catalyses tRNA(Leu) + L-leucine + ATP = L-leucyl-tRNA(Leu) + AMP + diphosphate. The chain is Leucine--tRNA ligase from Herminiimonas arsenicoxydans.